Reading from the N-terminus, the 48-residue chain is Large ribosomal subunit protein eL40 (48 aa).

This sequence belongs to the eukaryotic ribosomal protein eL40 family.

The protein is Large ribosomal subunit protein eL40 of Methanosphaerula palustris (strain ATCC BAA-1556 / DSM 19958 / E1-9c).